A 1722-amino-acid chain; its full sequence is MSDPRQSQEEKHKLGRASSKFKDPPRIMQSDDYFARKFKAINGNMGPTTSLNASNSNETGGGGPANGTPAVPKMGVRARVSEWPPKKDCSKELTCKALWESRSQTSYESITSVLQNGQSDQSEGQQDEQLDLDFVEAKYTIGDIFVHSPQRGLHPIRQRSNSDVTISDIDAEDVLDQNAVNPNTGAALHREYGSTSSIDRQGLSGENFFAMLRGYRVENYDHKAMVPFGFPEFFRCDPAISPSLHAAAQISRGEFVRISGLDYVDSALLMGRDRDKPFKRRLKSESVETSLFRKLRTVKSEHETFKFTSELEESRLERGIRPWNCQRCFAHYDVQSILFNINEAMATRANVGKRKNITTGASAASQTQMPTGQTGNCESPLGSKEDLNSKENLDADEGDGKSNDLVLSCPYFRNETGGEGDRRIALSRANSSSFSSGESCSFESSLSSHCTNAGVSVLEVPRENQPIHREKVKRYIIEHIDLGAYYYRKFFYGKEHQNYFGIDENLGPVAVSIRREKVEDAKEKEGSQFNYRVAFRTSELTTLRGAILEDAIPSTARHGTARGLPLKEVLEYVIPELSIQCLRQASNSPKVSEQLLKLDEQGLSFQHKIGILYCKAGQSTEEEMYNNETAGPAFEEFLDLLGQRVRLKGFSKYRAQLDNKTDSTGTHSLYTTYKDYELMFHVSTLLPYMPNNRQQLLRKRHIGNDIVTIVFQEPGALPFTPKSIRSHFQHVFVIVKVHNPCTENVCYSVGVSRSKDVPPFGPPIPKGVTFPKSAVFRDFLLAKVINAENAAHKSEKFRAMATRTRQEYLKDLAENFVTTATVDTSVKFSFITLGAKKKEKVKPRKDAHLFSIGAIMWHVIARDFGQSADIECLLGISNEFIMLIEKDSKNVVFNCSCRDVIGWTSGLVSIKVFYERGECVLLSSVDNCAEDIREIVQRLVIVTRGCETVEMTLRRNGLGQLGFHVNFEGIVADVEPFGFAWKAGLRQGSRLVEICKVAVATLTHEQMIDLLRTSVTVKVVIIQPHDDGSPRRGCSELCRIPMVEYKLDSEGTPCEYKTPFRRNTTWHRVPTPALQPLSRASPIPGTPDRLPCQQLLQQAQAAIPRSTSFDRKLPDGTRSSPSNQSSSSDPGPGGSGPWRPQVGYDGCQSPLLLEHQGSGPLECDGAREREDTMEASRHPETKWHGPPSKVLGSYKERALQKDGSCKDSPNKLSHIGDKSCSSHSSSNTLSSNTSSNSDDKHFGSGDLMDPELLGLTYIKGASTDSGIDTAPCMPATILGPVHLAGSRSLIHSRAEQWADAADVSGPDDEPAKLYSVHGYASTISAGSAAEGSMGDLSEISSHSSGSHHSGSPSAHCSKSSGSLDSSKVYIVSHSSGQQVPGSMSKPYHRQGAVNKYVIGWKKSEGSPPPEEPEVTECPGMYSEMDVMSTATQHQTVVGDAVAETQHVLSKEDFLKLMLPDSPLVEEGRRKFSFYGNLSPRRSLYRTLSDESICSNRRGSSFGSSRSSVLDQALPNDILFSTTPPYHSTLPPRAHPAPSMGSLRNEFWFSDGSLSDKSKCADPGLMPLPDTATGLDWTHLVDAARAFEGLDSDEELGLLCHHTSYLDQRVASFCTLTDMQHGQDLEGAQELPLCVDPGSGKEFMDTTGERSPSPLTGKVNQLELILRQLQTDLRKEKQDKAVLQAEVQHLRQDNMRLQEESQTATAQLRKFTEWFFTTIDKKS.

A compositionally biased stretch (basic and acidic residues) spans 1 to 12; that stretch reads MSDPRQSQEEKH. Disordered regions lie at residues 1-29 and 42-72; these read MSDPRQSQEEKHKLGRASSKFKDPPRIMQ and NGNMGPTTSLNASNSNETGGGGPANGTPAVP. The segment covering 45-56 has biased composition (polar residues); the sequence is MGPTTSLNASNS. Position 148 is a phosphoserine (serine 148). Residues 360–377 are compositionally biased toward polar residues; it reads GASAASQTQMPTGQTGNC. Positions 360 to 401 are disordered; that stretch reads GASAASQTQMPTGQTGNCESPLGSKEDLNSKENLDADEGDGK. Serine 379 and serine 383 each carry phosphoserine. Residues 383–401 are compositionally biased toward basic and acidic residues; it reads SKEDLNSKENLDADEGDGK. The Rap-GAP domain occupies 595-812; it reads LLKLDEQGLS…RTRQEYLKDL (218 aa). The region spanning 950–1026 is the PDZ domain; it reads EMTLRRNGLG…VKVVIIQPHD (77 aa). Serine 1029 is subject to Phosphoserine. 2 disordered regions span residues 1067–1245 and 1330–1360; these read HRVP…FGSG and EGSMGDLSEISSHSSGSHHSGSPSAHCSKSS. Low complexity-rich tracts occupy residues 1093 to 1102 and 1119 to 1130; these read QQLLQQAQAA and SSPSNQSSSSDP. Composition is skewed to basic and acidic residues over residues 1164-1183 and 1194-1217; these read DGAREREDTMEASRHPETKW and YKERALQKDGSCKDSPNKLSHIGD. Over residues 1219 to 1236 the composition is skewed to low complexity; that stretch reads SCSSHSSSNTLSSNTSSN. At serine 1244 the chain carries Phosphoserine. The segment covering 1337–1360 has biased composition (low complexity); sequence SEISSHSSGSHHSGSPSAHCSKSS. Phosphoserine is present on residues serine 1461, serine 1472, serine 1478, serine 1488, serine 1549, serine 1552, and serine 1591. Residues 1654–1712 adopt a coiled-coil conformation; the sequence is LTGKVNQLELILRQLQTDLRKEKQDKAVLQAEVQHLRQDNMRLQEESQTATAQLRKFTE.

In Homo sapiens (Human), this protein is Signal-induced proliferation-associated 1-like protein 2 (SIPA1L2).